A 209-amino-acid polypeptide reads, in one-letter code: Outer-membrane lipoprotein LolB (209 aa).

The N-terminal stretch at 1–21 is a signal peptide; it reads MNNMKTFKFLTALFATAILTA. Residue Cys-22 is the site of N-palmitoyl cysteine attachment. Cys-22 is lipidated: S-diacylglycerol cysteine.

It belongs to the LolB family. As to quaternary structure, monomer.

The protein resides in the cell outer membrane. Its function is as follows. Plays a critical role in the incorporation of lipoproteins in the outer membrane after they are released by the LolA protein. This is Outer-membrane lipoprotein LolB from Haemophilus influenzae (strain 86-028NP).